Reading from the N-terminus, the 155-residue chain is UBA-like domain-containing protein 1 (155 aa).

Residues 81–155 (KASESFNSSS…KASAAMEAER (75 aa)) form a disordered region. Positions 83–96 (SESFNSSSSPSMAT) are enriched in low complexity. Over residues 112–127 (ANQQSLWTQGPSAQQT) the composition is skewed to polar residues. The span at 139 to 155 (QQAASEQKASAAMEAER) shows a compositional bias: low complexity.

The protein belongs to the UBALD family.

In Danio rerio (Zebrafish), this protein is UBA-like domain-containing protein 1 (ubald1).